The sequence spans 328 residues: Dolichyl-diphosphooligosaccharide--protein glycosyltransferase subunit MAGT1 (328 aa).

A signal peptide spans 1-22; the sequence is MAALPVLVLVLLLACGGPRAAG. Topologically, residues 23–177 are extracellular; sequence QKRKEMVLSE…DVNIRVIRPP (155 aa). Positions 40–168 constitute a Thioredoxin domain; that stretch reads WTSKRSVIRM…LARWVADRTD (129 aa). N-linked (GlcNAc...) asparagine glycosylation occurs at Asn64. A disulfide bridge connects residues Cys80 and Cys83. Residues 178 to 198 traverse the membrane as a helical segment; the sequence is NYAGPLMLGLLLAVIGGLVYL. Topologically, residues 199–211 are cytoplasmic; sequence RGSNLDFLYNKTG. A helical membrane pass occupies residues 212-232; that stretch reads WAFAALCFVLAMTSGQMWNHI. Residues 233 to 257 are Extracellular-facing; that stretch reads RGPPYAHKNPHTGQVNYIHGSSQAQ. Residues 258–278 form a helical membrane-spanning segment; that stretch reads FVAETHIVLLFNGGVTLGMVL. Topologically, residues 279-293 are cytoplasmic; sequence LHEAATSDMDVGKRK. A helical transmembrane segment spans residues 294-314; that stretch reads IMCIAGIGLVVFFFSWLLSVF. At 315 to 328 the chain is on the extracellular side; the sequence is RSKYHGYPYSFLMS.

This sequence belongs to the OST3/OST6 family. In terms of assembly, accessory component of the STT3B-containing form of the oligosaccharyltransferase (OST) complex. OST exists in two different complex forms which contain common core subunits RPN1, RPN2, OST48, OST4, DAD1 and TMEM258, either STT3A or STT3B as catalytic subunits, and form-specific accessory subunits. OST can form stable complexes with the Sec61 complex or with both the Sec61 and TRAP complexes.

It is found in the cell membrane. The protein localises to the endoplasmic reticulum. The protein resides in the endoplasmic reticulum membrane. Its pathway is protein modification; protein glycosylation. Its function is as follows. Accessory component of the STT3B-containing form of the N-oligosaccharyl transferase (OST) complex which catalyzes the transfer of a high mannose oligosaccharide from a lipid-linked oligosaccharide donor to an asparagine residue within an Asn-X-Ser/Thr consensus motif in nascent polypeptide chains. Involved in N-glycosylation of STT3B-dependent substrates. Specifically required for the glycosylation of a subset of acceptor sites that are near cysteine residues; in this function seems to act redundantly with TUSC3. In its oxidized form proposed to form transient mixed disulfides with a glycoprotein substrate to facilitate access of STT3B to the unmodified acceptor site. Also has oxidoreductase-independent functions in the STT3B-containing OST complex possibly involving substrate recognition. Could indirectly play a role in Mg(2+) transport in epithelial cells. The sequence is that of Dolichyl-diphosphooligosaccharide--protein glycosyltransferase subunit MAGT1 from Gallus gallus (Chicken).